We begin with the raw amino-acid sequence, 302 residues long: MADSSNSSLNCTAIHDQTVLILGQVFNSVWLFISVIFLYIFACKLCFRPRIYLWLSFYTLGFMLWVLCKVLQEYVTGKFKCVITNCIGDFCLVFLSCIMLGIMLDRYLKIQGTLRGGMKDIHIGIFVSASCFGSLMIALLDGLHMGDSEKLQFNGTESFKCLPATSVSSYKAQLMFKSIFCIICIIMCLILTCLTAKKVLGTRLRKKYVIVGNVGLLSFVNILLWVMIACGLLKQALESNLSLCPTKQSTYIYPYTMPVTVIFVLVIYLFSSTHMKNAMRKSGQIRHSLSSPNQVQSSFRLV.

Over 1–20 (MADSSNSSLNCTAIHDQTVL) the chain is Extracellular. The helical transmembrane segment at 21–41 (ILGQVFNSVWLFISVIFLYIF) threads the bilayer. Over 42-50 (ACKLCFRPR) the chain is Cytoplasmic. The helical transmembrane segment at 51–71 (IYLWLSFYTLGFMLWVLCKVL) threads the bilayer. Residues 72–81 (QEYVTGKFKC) are Extracellular-facing. A helical transmembrane segment spans residues 82–102 (VITNCIGDFCLVFLSCIMLGI). Topologically, residues 103–122 (MLDRYLKIQGTLRGGMKDIH) are cytoplasmic. The helical transmembrane segment at 123 to 143 (IGIFVSASCFGSLMIALLDGL) threads the bilayer. The Extracellular portion of the chain corresponds to 144-173 (HMGDSEKLQFNGTESFKCLPATSVSSYKAQ). A helical transmembrane segment spans residues 174–194 (LMFKSIFCIICIIMCLILTCL). Over 195 to 208 (TAKKVLGTRLRKKY) the chain is Cytoplasmic. A helical membrane pass occupies residues 209 to 229 (VIVGNVGLLSFVNILLWVMIA). The Extracellular segment spans residues 230-249 (CGLLKQALESNLSLCPTKQS). The helical transmembrane segment at 250-270 (TYIYPYTMPVTVIFVLVIYLF) threads the bilayer. Topologically, residues 271-302 (SSTHMKNAMRKSGQIRHSLSSPNQVQSSFRLV) are cytoplasmic.

This sequence belongs to the G-protein coupled receptor 1 family.

Its subcellular location is the host cell membrane. It localises to the host endoplasmic reticulum membrane. In terms of biological role, acts as a viral G-protein coupled receptor that constitutively activates host alphai-type G-proteins, thereby inhibiting host forskolin-triggered CREB activation. The protein is G-protein coupled receptor A5 (A5) of Connochaetes taurinus (Blue wildebeest).